The primary structure comprises 903 residues: Translation initiation factor IF-2 (903 aa).

Disordered stretches follow at residues 57–171 (EKFK…QRRR) and 267–318 (PTPQ…EAVT). Residues 69 to 163 (KKEAKEPSEK…SEPQKPKESL (95 aa)) are compositionally biased toward basic and acidic residues. The segment covering 267-278 (PTPQPMQKTKQP) has biased composition (low complexity). The segment covering 299–308 (RRARKKHKKP) has biased composition (basic residues). The tr-type G domain maps to 402-569 (PRAPVITIMG…IVLLQAEILE (168 aa)). A G1 region spans residues 411–418 (GHVDHGKT). GTP is bound at residue 411–418 (GHVDHGKT). A G2 region spans residues 436 to 440 (GITQH). The G3 stretch occupies residues 457 to 460 (DTPG). Residues 457–461 (DTPGH) and 511–514 (NKMD) contribute to the GTP site. Residues 511-514 (NKMD) are G4. Positions 547–549 (SAK) are G5.

The protein belongs to the TRAFAC class translation factor GTPase superfamily. Classic translation factor GTPase family. IF-2 subfamily.

The protein resides in the cytoplasm. Functionally, one of the essential components for the initiation of protein synthesis. Protects formylmethionyl-tRNA from spontaneous hydrolysis and promotes its binding to the 30S ribosomal subunits. Also involved in the hydrolysis of GTP during the formation of the 70S ribosomal complex. This is Translation initiation factor IF-2 from Campylobacter curvus (strain 525.92).